The sequence spans 247 residues: Bidirectional sugar transporter SWEET1 (247 aa).

Residues 1–6 (MNIAHT) lie on the Extracellular side of the membrane. A helical transmembrane segment spans residues 7–27 (IFGVFGNATALFLFLAPSITF). The MtN3/slv 1 domain maps to 7-94 (IFGVFGNATA…LIFLFYAPKK (88 aa)). At 28-41 (KRIIKNKSTEQFSG) the chain is on the cytoplasmic side. Residues 42–62 (IPYPMTLLNCLLSAWYGLPFV) form a helical membrane-spanning segment. Topologically, residues 63 to 71 (SKDNTLVST) are extracellular. Residues 72 to 92 (INGTGAVIETVYVLIFLFYAP) traverse the membrane as a helical segment. Residues 93–98 (KKEKIK) are Cytoplasmic-facing. A helical membrane pass occupies residues 99–119 (IFGIFSCVLAVFATVALVSLF). Residues 120-127 (ALQGNGRK) are Extracellular-facing. Residues 128–148 (LFCGLAATVFSIIMYASPLSI) traverse the membrane as a helical segment. Residues 130 to 213 (CGLAATVFSI…ILYFIYCGNK (84 aa)) form the MtN3/slv 2 domain. At 149–162 (MRLVVKTKSVEFMP) the chain is on the cytoplasmic side. The chain crosses the membrane as a helical span at residues 163 to 183 (FFLSLFVFLCGTSWFVYGLIG). The Extracellular segment spans residues 184–187 (RDPF). The helical transmembrane segment at 188 to 208 (VAIPNGFGCALGTLQLILYFI) threads the bilayer. At 209-247 (YCGNKGEKSADAQKDEKSVEMKDDEKKQNVVNGKQDLQV) the chain is on the cytoplasmic side. A compositionally biased stretch (basic and acidic residues) spans 221–236 (QKDEKSVEMKDDEKKQ). Residues 221-247 (QKDEKSVEMKDDEKKQNVVNGKQDLQV) are disordered. The segment covering 237–247 (NVVNGKQDLQV) has biased composition (polar residues).

The protein belongs to the SWEET sugar transporter family. As to quaternary structure, forms homooligomers and heterooligomers with SWEET9, SWEET11, SWEET13, SWEET15, SWEET16 and SWEET17. As to expression, mainly expressed in flowers.

Its subcellular location is the cell membrane. The protein resides in the endoplasmic reticulum membrane. Functionally, mediates both low-affinity uptake and efflux of sugar across the plasma membrane. Can transport glucose, and, to a lower extent, mannose, fructose and galactose. This is Bidirectional sugar transporter SWEET1 from Arabidopsis thaliana (Mouse-ear cress).